Consider the following 1140-residue polypeptide: Eukaryotic translation initiation factor 3 subunit A (1140 aa).

Residues 319–502 form the PCI domain; the sequence is LQRMAAHVLL…HCIYFGTDLT (184 aa). Basic and acidic residues-rich tracts occupy residues 590–624, 826–903, 925–965, 1000–1019, 1026–1053, and 1061–1087; these read NNAR…EERE, RMAQ…RPEG, DRAD…KDNE, SRDD…DFRN, RGGD…EQQR, and DAPR…RDVR. Disordered stretches follow at residues 590 to 632 and 826 to 1140; these read NNAR…QNEI and RMAQ…VKRR. Residues 1091-1101 show a composition bias toward gly residues; it reads PKEGGGGGGGN. A compositionally biased stretch (basic and acidic residues) spans 1108–1130; it reads PRDEKPTTKQRDQPQDKENKAGD.

Belongs to the eIF-3 subunit A family. As to quaternary structure, component of the eukaryotic translation initiation factor 3 (eIF-3) complex. The eIF-3 complex interacts with pix.

The protein resides in the cytoplasm. In terms of biological role, RNA-binding component of the eukaryotic translation initiation factor 3 (eIF-3) complex, which is involved in protein synthesis of a specialized repertoire of mRNAs and, together with other initiation factors, stimulates binding of mRNA and methionyl-tRNAi to the 40S ribosome. The eIF-3 complex specifically targets and initiates translation of a subset of mRNAs involved in cell proliferation. The chain is Eukaryotic translation initiation factor 3 subunit A from Drosophila willistoni (Fruit fly).